Reading from the N-terminus, the 805-residue chain is Polycystin-2-like protein 1 (805 aa).

Residues 1 to 59 (MNAVGSPEGQELQKLGSGAWDNPAYSGPPSPHGTLRVCTISSTGPLQPQPKKPEDEPQE) are disordered. At 1–103 (MNAVGSPEGQ…ELYIKTTLRE (103 aa)) the chain is on the cytoplasmic side. A lipid anchor (S-palmitoyl cysteine) is attached at cysteine 38. The chain crosses the membrane as a helical span at residues 104–124 (LLVYIVFLVDICLLTYGMTSS). The Extracellular portion of the chain corresponds to 125–356 (SAYYYTKVMS…NWDFFIVGCE (232 aa)). N-linked (GlcNAc...) asparagine glycosylation is found at asparagine 177 and asparagine 207. Cysteine 210 and cysteine 223 are disulfide-bonded. Residue asparagine 241 is glycosylated (N-linked (GlcNAc...) asparagine). A helical membrane pass occupies residues 357–376 (VIFCVFIFYYVVEEILELHI). Residues glutamate 370 and glutamate 373 each coordinate Ca(2+). The Cytoplasmic portion of the chain corresponds to 377–384 (HRLRYLSS). The chain crosses the membrane as a helical span at residues 385 to 405 (IWNILDLVVILLSIVAVGFHI). The Ca(2+) site is built by asparagine 387 and aspartate 390. The Extracellular portion of the chain corresponds to 406 to 433 (FRTLEVNRLMGKLLQQPNTYADFEFLAF). Residues 434-454 (WQTQYNNMNAVNLFFAWIKIF) traverse the membrane as a helical segment. The Cytoplasmic segment spans residues 455 to 479 (KYISFNKTMTQLSSTLARCAKDILG). A helical transmembrane segment spans residues 480-499 (FAVMFFIVFFAYAQLGYLLF). The Extracellular portion of the chain corresponds to 500–511 (GTQVENFSTFIK). Asparagine 505 carries N-linked (GlcNAc...) asparagine glycosylation. The pore-forming intramembrane region spans 512–526 (CIFTQFRIILGDFDY). At 527 to 536 (NAIDNANRIL) the chain is on the extracellular side. A helical transmembrane segment spans residues 537–557 (GPAYFVTYVFFVFFVLLNMFL). The Cytoplasmic segment spans residues 558-805 (AIINDTYSEV…RGEIPTLQRS (248 aa)). One can recognise an EF-hand domain in the interval 633–668 (HEITELTATFTKFDRDGNRILDEKEQEKMRQDLEEE). Coiled coils occupy residues 650 to 686 (NRILDEKEQEKMRQDLEEERVALNTEIEKLGRSIVSS) and 700 to 740 (GWVS…MLER). A required for homooligomerization region spans residues 704–763 (GEEFYMLTRRVLQLETVLEGVVSQIDAVGSKLKMLERKGWLAPSPGVKEQAIWKHPQPAP). The disordered stretch occupies residues 759 to 805 (PQPAPAVTPDPWGVQGGQESEVPYKREEEALEERRLSRGEIPTLQRS). Positions 780–796 (VPYKREEEALEERRLSR) are enriched in basic and acidic residues.

Belongs to the polycystin family. In terms of assembly, oligomer. Functional PKD2L1 homotetramer can be formed either through C-terminal trimerization followed by N-terminal dimerization of a fourth subunit with a subunit in the trimer or through dimerization followed by trimerization. Heterotetramer with either PKD1L1, PKD1L3 or PKD1; the heterotetrameric complex contains three PKD1L2 chains plus one chain from another family member. Interacts with PKD1L1, forming a ciliary calcium channel. Interacts with PKD1L3, forming a cation channel that is activated by low extracellular pH. Interacts with PKD1; this heteromeric functional cation channels is opened by hypo-osmotic stimulation. Interacts with RACK1; inhibits the channel activity possibly by impairing localization to the cell membrane. In terms of processing, palmitoylation is important for expression at the cell membrane and for channel activity. Detected in taste bud cells in fungiform papillae (at protein level). Ubiquitous. Expressed in adult heart, skeletal muscle, brain, spleen, testis, retina and liver. Isoform 4 appears to be expressed only in transformed lymphoblasts.

The protein resides in the cell projection. It is found in the cilium membrane. It localises to the cell membrane. The protein localises to the cytoplasmic vesicle. It carries out the reaction Ca(2+)(in) = Ca(2+)(out). The catalysed reaction is Na(+)(in) = Na(+)(out). It catalyses the reaction K(+)(in) = K(+)(out). The enzyme catalyses Mg(2+)(in) = Mg(2+)(out). Its activity is regulated as follows. The non-selective cation channel is gated following an off-response property by acid: gated open after the removal of acid stimulus, but not during acid application. Channel activity is inhibited by phosphatidylinositol-4,5-bisphosphate (PIP2). Non-selective cation channel activity is substantially increased when either the extracellular or intracellular calcium-ion concentration is raised. Regulation of non-selective cation channel activity by external calcium is bimodal, first sensitizing and subsequently inactivating the current. Functionally, homotetrameric, non-selective cation channel that is permeable to sodium, potassium, magnesium and calcium. Also forms functionnal heteromeric channels with PKD1, PKD1L1 and PKD1L3. Pore-forming subunit of a heterotetrameric, non-selective cation channel, formed by PKD1L2 and PKD1L3, that is permeable to sodium, potassium, magnesium and calcium and which may act as a sour taste receptor in gustatory cells; however, its contribution to sour taste perception is unclear in vivo and may be indirect. The homomeric and heteromeric channels formed by PKD1L2 and PKD1L3 are activated by low pH and Ca(2+), but opens only when the extracellular pH rises again and after the removal of acid stimulus. Pore-forming subunit of a calcium-permeant ion channel formed by PKD1L2 and PKD1L1 in primary cilia, where it controls cilium calcium concentration, without affecting cytoplasmic calcium concentration, and regulates sonic hedgehog/SHH signaling and GLI2 transcription. The PKD1L1:PKD2L1 complex channel is mechanosensitive only at high pressures and is highly temperature sensitive. Pore-forming subunit of a calcium-permeant ion channel formed by PKD1L2 and PKD1 that produces a transient increase in intracellular calcium concentration upon hypo-osmotic stimulation (200 mOsm). May play a role in the perception of carbonation taste. May play a role in the sensory perception of water, via a mechanism that activates the channel in response to dilution of salivary bicarbonate and changes in salivary pH. This chain is Polycystin-2-like protein 1, found in Homo sapiens (Human).